The following is a 2883-amino-acid chain: Bifunctional DNA-directed RNA polymerase subunit beta-beta' (2883 aa).

The interval 1–1377 (MPTTLKSGNR…DVTVYGETEE (1377 aa)) is DNA-directed RNA polymerase subunit beta. The interval 1382–2883 (PMPIKEDDRP…IRIKEKTEGA (1502 aa)) is DNA-directed RNA polymerase subunit beta'. 4 residues coordinate Zn(2+): Cys1447, Cys1449, Cys1462, and Cys1465. Mg(2+)-binding residues include Asp1846, Asp1848, and Asp1850. 4 residues coordinate Zn(2+): Cys2176, Cys2250, Cys2257, and Cys2260.

This sequence in the N-terminal section; belongs to the RNA polymerase beta chain family. It in the C-terminal section; belongs to the RNA polymerase beta' chain family. In terms of assembly, the RNAP catalytic core consists of 2 alpha, 1 beta/beta' and 1 omega subunit. When a sigma factor is associated with the core the holoenzyme is formed, which can initiate transcription. Requires Mg(2+) as cofactor. Zn(2+) is required as a cofactor.

It catalyses the reaction RNA(n) + a ribonucleoside 5'-triphosphate = RNA(n+1) + diphosphate. Its function is as follows. DNA-dependent RNA polymerase catalyzes the transcription of DNA into RNA using the four ribonucleoside triphosphates as substrates. This is Bifunctional DNA-directed RNA polymerase subunit beta-beta' (rpoBC) from Wolinella succinogenes (strain ATCC 29543 / DSM 1740 / CCUG 13145 / JCM 31913 / LMG 7466 / NCTC 11488 / FDC 602W) (Vibrio succinogenes).